Consider the following 1003-residue polypeptide: Phosphoenolpyruvate carboxylase (1003 aa).

Residues 1–24 (MIMTVSDPGGSSMSSSSAITPESE) form a disordered region. Catalysis depends on residues histidine 190 and lysine 646.

It belongs to the PEPCase type 1 family. Mg(2+) is required as a cofactor.

It carries out the reaction oxaloacetate + phosphate = phosphoenolpyruvate + hydrogencarbonate. In terms of biological role, forms oxaloacetate, a four-carbon dicarboxylic acid source for the tricarboxylic acid cycle. The protein is Phosphoenolpyruvate carboxylase of Synechococcus sp. (strain WH7803).